A 375-amino-acid chain; its full sequence is Probable dipeptidase PepE (375 aa).

2 consecutive transmembrane segments (helical) span residues 15–35 (LALA…ITPG) and 55–75 (LVLP…LAAL). 5 residues coordinate Mn(2+): aspartate 230, aspartate 242, histidine 306, glutamate 335, and glutamate 349.

This sequence belongs to the peptidase M24B family. Requires Mn(2+) as cofactor.

The protein localises to the cell membrane. The polypeptide is Probable dipeptidase PepE (pepE) (Mycobacterium bovis (strain ATCC BAA-935 / AF2122/97)).